Here is a 91-residue protein sequence, read N- to C-terminus: N(2)-fixation sustaining protein CowN (91 aa).

This sequence belongs to the CowN family.

Its function is as follows. Is required to sustain N(2)-dependent growth in the presence of low levels of carbon monoxide (CO). Probably acts by protecting the N(2) fixation ability of the nitrogenase complex, which is inactivated in the presence of CO. The polypeptide is N(2)-fixation sustaining protein CowN (Gluconacetobacter diazotrophicus (strain ATCC 49037 / DSM 5601 / CCUG 37298 / CIP 103539 / LMG 7603 / PAl5)).